The sequence spans 204 residues: Isochorismatase domain-containing protein 2 (204 aa).

This sequence belongs to the isochorismatase family. In terms of assembly, interacts with CDKN2A.

It is found in the cytoplasm. Its subcellular location is the nucleus. In Bos taurus (Bovine), this protein is Isochorismatase domain-containing protein 2 (ISOC2).